The primary structure comprises 98 residues: uncharacterized protein (98 aa).

The N-terminal stretch at 1–23 is a signal peptide; it reads MKYVALAFVLSLVILQISAQVGA.

Nacreous layer of shell (at protein level). Expressed primarily in the mantle with highest level in the mantle pallium and lower level in the mantle edge.

The protein resides in the secreted. This is an uncharacterized protein from Pinctada maxima (Silver-lipped pearl oyster).